A 104-amino-acid chain; its full sequence is L-rhamnose mutarotase (104 aa).

Tyr-18 is a substrate binding site. The active-site Proton donor is His-22. Substrate contacts are provided by residues Tyr-41 and 76–77 (WW).

It belongs to the rhamnose mutarotase family. As to quaternary structure, homodimer.

It localises to the cytoplasm. The enzyme catalyses alpha-L-rhamnose = beta-L-rhamnose. It participates in carbohydrate metabolism; L-rhamnose metabolism. Functionally, involved in the anomeric conversion of L-rhamnose. The polypeptide is L-rhamnose mutarotase (Escherichia fergusonii (strain ATCC 35469 / DSM 13698 / CCUG 18766 / IAM 14443 / JCM 21226 / LMG 7866 / NBRC 102419 / NCTC 12128 / CDC 0568-73)).